The primary structure comprises 454 residues: Phosphoglucosamine mutase (454 aa).

Serine 101 acts as the Phosphoserine intermediate in catalysis. Positions 101, 243, 245, and 247 each coordinate Mg(2+). Residue serine 101 is modified to Phosphoserine.

Belongs to the phosphohexose mutase family. Mg(2+) is required as a cofactor. Post-translationally, activated by phosphorylation.

It catalyses the reaction alpha-D-glucosamine 1-phosphate = D-glucosamine 6-phosphate. Its function is as follows. Catalyzes the conversion of glucosamine-6-phosphate to glucosamine-1-phosphate. The protein is Phosphoglucosamine mutase of Geotalea uraniireducens (strain Rf4) (Geobacter uraniireducens).